Here is a 408-residue protein sequence, read N- to C-terminus: Multidrug resistance protein MdtG (408 aa).

Transmembrane regions (helical) follow at residues 16-36 (LIVA…VMPF), 58-78 (IVFS…GGLA), 92-112 (LGMG…QFLI), 115-135 (ALLG…ATQV), 146-166 (TLST…GLLA), 173-193 (PVFF…LFCI), 224-244 (LFVT…ILTL), 256-276 (VAFI…LSAP), 290-310 (ILIT…YVQT), 319-339 (FLLG…LVYN), and 378-398 (AVFL…WNSL).

Belongs to the major facilitator superfamily. DHA1 family. MdtG (TC 2.A.1.2.20) subfamily.

It localises to the cell inner membrane. In terms of biological role, confers resistance to fosfomycin and deoxycholate. The protein is Multidrug resistance protein MdtG of Escherichia coli O7:K1 (strain IAI39 / ExPEC).